Here is a 213-residue protein sequence, read N- to C-terminus: Protein ras-1 (213 aa).

A GTP-binding site is contributed by 15-22; that stretch reads GGGGVGKS. An Effector region motif is present at residues 37 to 45; the sequence is YDPTIEDSY. Residues 62-66 and 121-124 each bind GTP; these read DTAGQ and NKYD. The residue at position 210 (C210) is a Cysteine methyl ester. C210 carries S-farnesyl cysteine lipidation. Residues 211–213 constitute a propeptide, removed in mature form; sequence IMM.

The protein belongs to the small GTPase superfamily. Ras family.

It localises to the cell membrane. It catalyses the reaction GTP + H2O = GDP + phosphate + H(+). Functionally, ras proteins bind GDP/GTP and possess intrinsic GTPase activity. The polypeptide is Protein ras-1 (ras-1) (Neurospora crassa (strain ATCC 24698 / 74-OR23-1A / CBS 708.71 / DSM 1257 / FGSC 987)).